The primary structure comprises 534 residues: Low affinity inorganic phosphate transporter 1 (534 aa).

Topologically, residues 1–23 (MAKDLQVLTALDVAKTQLYHFTA) are cytoplasmic. Residues 24–44 (IVIAGMGFFTDAYDLFCISLV) form a helical membrane-spanning segment. The Extracellular portion of the chain corresponds to 45–69 (TKLLGRIYYHHEGALKPGSLPPNVA). Residues 70 to 90 (AAVNGVAFCGTLAGQLFFGWL) form a helical membrane-spanning segment. Residues 91-98 (GDKLGRKK) lie on the Cytoplasmic side of the membrane. Residues 99–119 (VYGMTLMLMVICSIASGLSFG) traverse the membrane as a helical segment. Residues 120 to 124 (HTPKS) are Extracellular-facing. The helical transmembrane segment at 125 to 145 (VMATLCFFRFWLGFGIGGDYP) threads the bilayer. Residues 146-163 (LSATIMSEYANKKTRGAF) are Cytoplasmic-facing. Residues 164-184 (IAAVFAMQGFGILAGGMVAII) traverse the membrane as a helical segment. The Extracellular portion of the chain corresponds to 185–210 (VSAAFKNQFPAPAYKDGALASTISQA). Residues 211 to 231 (DFVWRIIVMFGAIPTALTYYW) traverse the membrane as a helical segment. Topologically, residues 232–290 (RMKMPETARYTALVAKNLKQATNDMSKVLQVEIEPEQEKVEEISQGNDFGLFTKQFLRR) are cytoplasmic. A helical transmembrane segment spans residues 291–311 (HGLHLLGTASTWFLLDIAFYS). The Extracellular segment spans residues 312-343 (QNLFQKDIFSAIGWIPPAETMNALEEVYRIAR). A helical membrane pass occupies residues 344-364 (AQTLIALCSTVPGYWFTVAFI). Topologically, residues 365–369 (DKIGR) are cytoplasmic. Residues 370–390 (FAIQLMGFFFMTVFMFALAIP) form a helical membrane-spanning segment. At 391–400 (YTHWTHKDNR) the chain is on the extracellular side. A helical transmembrane segment spans residues 401-421 (IGFVIMYSLTFFFANFGPNAT). Residues 422–440 (TFVVPAEIFPARLRSTCHG) lie on the Cytoplasmic side of the membrane. A helical transmembrane segment spans residues 441-461 (ISAAAGKAGAMVGAFGFLYAA). Topologically, residues 462–481 (QSTDPKKTDAGYPAGIGVRN) are extracellular. The chain crosses the membrane as a helical span at residues 482–502 (SLIVLGCVNFLGMLFTLLVPE). At 503-534 (SKGKSLEEMSRENEGEDENGTEMRASGRTVPV) the chain is on the cytoplasmic side. Residues 507–534 (SLEEMSRENEGEDENGTEMRASGRTVPV) form a disordered region.

This sequence belongs to the major facilitator superfamily. Phosphate:H(+) symporter (TC 2.A.1.9) family.

The protein localises to the cell membrane. It carries out the reaction phosphate(in) + H(+)(in) = phosphate(out) + H(+)(out). In terms of biological role, low-affinity transporter for external inorganic phosphate (Pi). Involved in phosphorus (P) remobilization from dying to developing tissues during corolla senescence in an ethylene-dependent manner. The protein is Low affinity inorganic phosphate transporter 1 of Petunia hybrida (Petunia).